The primary structure comprises 322 residues: Transaldolase (322 aa).

Lys-132 functions as the Schiff-base intermediate with substrate in the catalytic mechanism. 2 positions are modified to phosphoserine: Ser-268 and Ser-269.

It belongs to the transaldolase family. Type 1 subfamily. As to quaternary structure, homodimer.

The enzyme catalyses D-sedoheptulose 7-phosphate + D-glyceraldehyde 3-phosphate = D-erythrose 4-phosphate + beta-D-fructose 6-phosphate. The protein operates within carbohydrate degradation; pentose phosphate pathway; D-glyceraldehyde 3-phosphate and beta-D-fructose 6-phosphate from D-ribose 5-phosphate and D-xylulose 5-phosphate (non-oxidative stage): step 2/3. In terms of biological role, transaldolase is important for the balance of metabolites in the pentose-phosphate pathway. The sequence is that of Transaldolase (tal1) from Schizosaccharomyces pombe (strain 972 / ATCC 24843) (Fission yeast).